Consider the following 202-residue polypeptide: MRLNFTKLFAGAVALAWTTESMATNAVTAHLSPLSRSLDHIQSDDSTQRRLRTINGADEERFSRMSMAGLRRALELELKEMHLESVATNQLVVRICTILGIEVAKSTPTNLNKLAELIKVEKEAENVAKKVQNPVDQADVILGLLIYPVKQGDVLGNKLLEKWPLLPKKAIINRFHRLKNHEVPKEPQPFAAHVHAPVVVAH.

The signal sequence occupies residues 1–23 (MRLNFTKLFAGAVALAWTTESMA). The short motif at 49–61 (RRLRTINGADEER) is the RxLR-dEER element.

It belongs to the RxLR effector family.

It is found in the secreted. The protein localises to the host cytoplasm. The protein resides in the host nucleus. Effector that acts as a broad suppressor of cell death to interrupt plant immunity. Inhibits cell death induced by cell death-inducing proteins, including the PAMP elicitor INF1 from P.infestans. The protein is Secreted RxLR effector protein 11 of Plasmopara viticola (Downy mildew of grapevine).